Here is a 348-residue protein sequence, read N- to C-terminus: Heat-inducible transcription repressor HrcA (348 aa).

It belongs to the HrcA family.

Negative regulator of class I heat shock genes (grpE-dnaK-dnaJ and groELS operons). Prevents heat-shock induction of these operons. The protein is Heat-inducible transcription repressor HrcA of Syntrophobacter fumaroxidans (strain DSM 10017 / MPOB).